The primary structure comprises 525 residues: MTQDIHAHRILILDFGSQYTQLIARRVREAGVYCEIYAWDAPETAIRDFGAAGFILSGGPESMTVDNGPRVPEAVFQAGVPVLGICYGMQAMAGQLGGRVEASDHKEFGYARVRARGHSRLLRDIEDHASPEGWGLLDVWMSHGDRVTGLPPGFKLIASTESCPIAGIGDDERGYYGVQFHPEVTHTPQGARILSRFVHEICGCPADWTPGNIVDDLIERVRRQVGGDKVLLGLSGGVDSSVVAALLHRAIGDQLTCVFVDNGLLRKDEGDQVMATFARHMGVNVIRVDAEARFLEALKGVDDPERKRKIIGNMFIEVFDEQAARLTEVDWLAQGTIYPDVIESAGSATGKAHVIKSHHNVGGLPEDMTLKLVEPLRELFKDEVRRIGLELGLPADMVYRHPFPGPGLGVRILGEVRKEYADLLREADAIFIEELRAHDLYDQVSQAFAVFLPVKSVGVTGDGRRYEYVVALRAVETIDFMTARWAHLPYEFLDHVSRRIINEIPGISRVAYDISGKPPATIEWE.

Residues 9–207 (RILILDFGSQ…VHEICGCPAD (199 aa)) form the Glutamine amidotransferase type-1 domain. Catalysis depends on C86, which acts as the Nucleophile. Active-site residues include H181 and E183. Residues 208–400 (WTPGNIVDDL…LGLPADMVYR (193 aa)) enclose the GMPS ATP-PPase domain. Position 235–241 (235–241 (SGGVDSS)) interacts with ATP.

In terms of assembly, homodimer.

The catalysed reaction is XMP + L-glutamine + ATP + H2O = GMP + L-glutamate + AMP + diphosphate + 2 H(+). It participates in purine metabolism; GMP biosynthesis; GMP from XMP (L-Gln route): step 1/1. Catalyzes the synthesis of GMP from XMP. In Alkalilimnicola ehrlichii (strain ATCC BAA-1101 / DSM 17681 / MLHE-1), this protein is GMP synthase [glutamine-hydrolyzing].